The chain runs to 96 residues: Xylulose kinase (96 aa).

71–72 (QH) contributes to the substrate binding site.

Belongs to the FGGY kinase family.

It catalyses the reaction D-xylulose + ATP = D-xylulose 5-phosphate + ADP + H(+). In terms of biological role, catalyzes the phosphorylation of D-xylulose to D-xylulose 5-phosphate. This Arthrobacter sp. (strain NRRL B3728) protein is Xylulose kinase.